The primary structure comprises 791 residues: Putative inactive tyrosine-protein kinase Wsck (791 aa).

The first 26 residues, 1–26 (MECGSHSGHRPIPIWLSSCLVAMCLG), serve as a signal peptide directing secretion. Topologically, residues 27–401 (LPLGAAVPQE…YATFEKGQSS (375 aa)) are extracellular. One can recognise a WSC domain in the interval 39 to 125 (AYYYVGCYTA…VGVHSYYSTI (87 aa)). The region spanning 131–246 (GPHHLRISNK…ASIEATTEVG (116 aa)) is the Fibronectin type-III domain. Residues asparagine 139, asparagine 217, and asparagine 329 are each glycosylated (N-linked (GlcNAc...) asparagine). Residues 402-422 (VVALAVTCVIFGSCLLLSLIA) form a helical membrane-spanning segment. At 423–791 (YFYLRYKTCR…PQLEAVATMG (369 aa)) the chain is on the cytoplasmic side. The Protein kinase domain maps to 493–758 (LNVNDVIGDG…DVAFGVRQLM (266 aa)). 499–507 (IGDGRFGEI) contributes to the ATP binding site.

Belongs to the protein kinase superfamily. Tyr protein kinase family.

It localises to the membrane. Its function is as follows. Probably lacks tyrosine-protein kinase activity. This is Putative inactive tyrosine-protein kinase Wsck from Drosophila melanogaster (Fruit fly).